Reading from the N-terminus, the 183-residue chain is Ribosome-recycling factor (183 aa).

This sequence belongs to the RRF family.

It is found in the cytoplasm. Responsible for the release of ribosomes from messenger RNA at the termination of protein biosynthesis. May increase the efficiency of translation by recycling ribosomes from one round of translation to another. The sequence is that of Ribosome-recycling factor from Bifidobacterium longum subsp. infantis (strain ATCC 15697 / DSM 20088 / JCM 1222 / NCTC 11817 / S12).